A 230-amino-acid polypeptide reads, in one-letter code: Protein tumorous testis (230 aa).

In terms of domain architecture, RRM spans 37-128 (GELFLSCIPR…RELVLKNVES (92 aa)).

In terms of assembly, part of a complex composed of at least tut, bam and bgcn; complex formation does not require RNA. Interacts with bam (via N-terminus); the interaction is direct. Interacts with bgcn; the interaction is indirect and is mediated by bam. As part of the bam-bgcn-tut complex associates with twin; may recruit the CCR4-NOT1 deadenylation complex to mRNA 3'UTRs to mediate post-transcriptional regulation of expression.

It localises to the cytoplasm. Its function is as follows. RNA binding protein that forms a complex with bam and bgcn, involved in 3'UTR-dependent regulation of a subset of mRNAs. Preferentially binds a long isoform of mei-P26 transcripts. Involved in 3'UTR-dependent post-transcriptional repression of several 3'-RNA processing factors. Involved in promoting germline stem cell lineage differentiation and mitosis-to-meiosis transition. Required for proper transit amplification of spermatogonia. This Drosophila melanogaster (Fruit fly) protein is Protein tumorous testis.